The following is a 410-amino-acid chain: UPF0761 membrane protein Csal_1895 (410 aa).

The next 6 membrane-spanning stretches (helical) occupy residues Leu-43–Phe-63, Ser-99–Val-119, Phe-139–Leu-159, Val-180–Met-200, Ala-212–Leu-232, and Phe-247–Gly-267.

Belongs to the UPF0761 family.

The protein localises to the cell inner membrane. The sequence is that of UPF0761 membrane protein Csal_1895 from Chromohalobacter salexigens (strain ATCC BAA-138 / DSM 3043 / CIP 106854 / NCIMB 13768 / 1H11).